Here is a 249-residue protein sequence, read N- to C-terminus: 2,3-bisphosphoglycerate-dependent phosphoglycerate mutase (249 aa).

Substrate-binding positions include 8 to 15 (RHGESVWN), 21 to 22 (TG), arginine 60, 87 to 90 (ERHY), lysine 98, 114 to 115 (RR), and 183 to 184 (GN). Catalysis depends on histidine 9, which acts as the Tele-phosphohistidine intermediate. The active-site Proton donor/acceptor is glutamate 87.

Belongs to the phosphoglycerate mutase family. BPG-dependent PGAM subfamily.

The catalysed reaction is (2R)-2-phosphoglycerate = (2R)-3-phosphoglycerate. It functions in the pathway carbohydrate degradation; glycolysis; pyruvate from D-glyceraldehyde 3-phosphate: step 3/5. Catalyzes the interconversion of 2-phosphoglycerate and 3-phosphoglycerate. This chain is 2,3-bisphosphoglycerate-dependent phosphoglycerate mutase, found in Chloroherpeton thalassium (strain ATCC 35110 / GB-78).